The sequence spans 60 residues: Single-pass membrane and coiled-coil domain-containing protein 4 homolog (60 aa).

The tract at residues 1–22 (MRKLRGGQTRETRKQKQERREE) is disordered. A compositionally biased stretch (basic and acidic residues) spans 8–22 (QTRETRKQKQERREE). The stretch at 8-34 (QTRETRKQKQERREENQKIQQQLKTIV) forms a coiled coil. The chain crosses the membrane as a helical span at residues 30-50 (LKTIVLPICGVVFLCIVAYVF).

The protein belongs to the SMCO4 family.

The protein resides in the membrane. In Culex quinquefasciatus (Southern house mosquito), this protein is Single-pass membrane and coiled-coil domain-containing protein 4 homolog.